The sequence spans 283 residues: MIVTEKAPAKINLALDTPMRYLDGLPRWNMVMNAVDLADYVTVEIHHRPQTIKVYTNSGFLPNDQRNLAYQAAHILKTRFHQTDGVTIRIKKKIPVAAGLGGGSSDAAAVLRALNKAWRLGLSLDELARLSLSIDSDVPFCVYSQTAHVTGHGEIVEPLPAFPHYWVVIAKPKLSVSTPVILRQINYERLVHPQTDQLVEAIKEGKFQESFQYMGNALEAVTMEAHPEIARLKERMQKLGADVAQMSGTGPSVFALCHAESRAKRIYNSLRGFCPEVYQVVLL.

Lysine 10 is an active-site residue. 95-105 (PVAAGLGGGSS) provides a ligand contact to ATP. The active site involves aspartate 137.

Belongs to the GHMP kinase family. IspE subfamily.

The enzyme catalyses 4-CDP-2-C-methyl-D-erythritol + ATP = 4-CDP-2-C-methyl-D-erythritol 2-phosphate + ADP + H(+). The protein operates within isoprenoid biosynthesis; isopentenyl diphosphate biosynthesis via DXP pathway; isopentenyl diphosphate from 1-deoxy-D-xylulose 5-phosphate: step 3/6. In terms of biological role, catalyzes the phosphorylation of the position 2 hydroxy group of 4-diphosphocytidyl-2C-methyl-D-erythritol. In Limosilactobacillus fermentum (strain NBRC 3956 / LMG 18251) (Lactobacillus fermentum), this protein is 4-diphosphocytidyl-2-C-methyl-D-erythritol kinase.